The chain runs to 152 residues: Acidic phospholipase A2 S16-19 (152 aa).

Residues 1–19 (MYPAHLLVLLAVCVSLLGA) form the signal peptide. Positions 20 to 27 (SNIPLPSL) are excised as a propeptide. Cystine bridges form between Cys-38/Cys-104, Cys-54/Cys-151, Cys-71/Cys-132, Cys-78/Cys-125, Cys-88/Cys-118, and Cys-111/Cys-123. Residues Tyr-55, Gly-57, and Gly-59 each coordinate Ca(2+). His-75 is a catalytic residue. Asp-76 serves as a coordination point for Ca(2+). Asp-126 is a catalytic residue.

This sequence belongs to the phospholipase A2 family. Group I subfamily. D49 sub-subfamily. The cofactor is Ca(2+). In terms of processing, this enzyme lacks one of the seven disulfide bonds found in similar PLA2 proteins. In terms of tissue distribution, expressed by the venom gland.

It localises to the secreted. The enzyme catalyses a 1,2-diacyl-sn-glycero-3-phosphocholine + H2O = a 1-acyl-sn-glycero-3-phosphocholine + a fatty acid + H(+). In terms of biological role, snake venom phospholipase A2 (PLA2) that inhibits collagen-induced platelet aggregation. PLA2 catalyzes the calcium-dependent hydrolysis of the 2-acyl groups in 3-sn-phosphoglycerides. This is Acidic phospholipase A2 S16-19 from Austrelaps superbus (Lowland copperhead snake).